The chain runs to 97 residues: uncharacterized protein (97 aa).

An N-terminal signal peptide occupies residues 1–21 (MNKKFSISLLSTILAFLLVLG). Cys-22 is lipidated: N-palmitoyl cysteine. Cys-22 carries the S-diacylglycerol cysteine lipid modification.

It to B.burgdorferi BBD15.

The protein resides in the cell membrane. This is an uncharacterized protein from Borreliella burgdorferi (strain ATCC 35210 / DSM 4680 / CIP 102532 / B31) (Borrelia burgdorferi).